The primary structure comprises 207 residues: Large ribosomal subunit protein bL17m (207 aa).

Residues 173–200 show a composition bias toward basic and acidic residues; it reads EKESEHARLKEDHEDEKTVKKDWKRGDP. The tract at residues 173–207 is disordered; it reads EKESEHARLKEDHEDEKTVKKDWKRGDPIPRPTYI.

The protein belongs to the bacterial ribosomal protein bL17 family. Component of the mitochondrial large ribosomal subunit (mt-LSU). Mature yeast 74S mitochondrial ribosomes consist of a small (37S) and a large (54S) subunit. The 37S small subunit contains a 15S ribosomal RNA (15S mt-rRNA) and at least 32 different proteins. The 54S large subunit contains a 21S rRNA (21S mt-rRNA) and at least 45 different proteins.

Its subcellular location is the mitochondrion. Functionally, component of the mitochondrial ribosome (mitoribosome), a dedicated translation machinery responsible for the synthesis of mitochondrial genome-encoded proteins, including at least some of the essential transmembrane subunits of the mitochondrial respiratory chain. The mitoribosomes are attached to the mitochondrial inner membrane and translation products are cotranslationally integrated into the membrane. This is Large ribosomal subunit protein bL17m (mrpl8) from Schizosaccharomyces pombe (strain 972 / ATCC 24843) (Fission yeast).